A 184-amino-acid polypeptide reads, in one-letter code: Ras-related protein RabN2 (184 aa).

3-10 (GDYRSGKT) lines the GTP pocket. The Effector region signature appears at 25–32 (TNPSTFDY). GTP contacts are provided by residues 50–54 (DTAGH) and 117–120 (TKSD).

This sequence belongs to the small GTPase superfamily. Rab family.

The protein is Ras-related protein RabN2 (rabN2) of Dictyostelium discoideum (Social amoeba).